Consider the following 377-residue polypeptide: S-adenosylmethionine synthase (377 aa).

Histidine 14 contributes to the ATP binding site. Aspartate 16 lines the Mg(2+) pocket. Glutamate 42 contacts K(+). Glutamine 98 is a binding site for L-methionine. Residues 98–108 (QSADIALGIDL) are flexible loop. ATP-binding positions include 162–164 (DMK), 228–229 (RF), aspartate 237, 243–244 (RK), alanine 260, and lysine 264. Aspartate 237 contributes to the L-methionine binding site. Lysine 268 provides a ligand contact to L-methionine.

This sequence belongs to the AdoMet synthase family. Homotetramer; dimer of dimers. The cofactor is Mg(2+). K(+) serves as cofactor.

The protein localises to the cytoplasm. It carries out the reaction L-methionine + ATP + H2O = S-adenosyl-L-methionine + phosphate + diphosphate. The protein operates within amino-acid biosynthesis; S-adenosyl-L-methionine biosynthesis; S-adenosyl-L-methionine from L-methionine: step 1/1. Catalyzes the formation of S-adenosylmethionine (AdoMet) from methionine and ATP. The overall synthetic reaction is composed of two sequential steps, AdoMet formation and the subsequent tripolyphosphate hydrolysis which occurs prior to release of AdoMet from the enzyme. The sequence is that of S-adenosylmethionine synthase from Mesoplasma florum (strain ATCC 33453 / NBRC 100688 / NCTC 11704 / L1) (Acholeplasma florum).